A 180-amino-acid polypeptide reads, in one-letter code: Oligoribonuclease (180 aa).

The 162-residue stretch at 7-168 (LVWIDLEMTG…QDIRDSIDEL (162 aa)) folds into the Exonuclease domain. Tyrosine 128 is a catalytic residue.

Belongs to the oligoribonuclease family.

Its subcellular location is the cytoplasm. Functionally, 3'-to-5' exoribonuclease specific for small oligoribonucleotides. This is Oligoribonuclease from Dichelobacter nodosus (strain VCS1703A).